The following is a 399-amino-acid chain: Tyrosine--tRNA ligase (399 aa).

Residues 44-53 (PTAPDLHLGH) carry the 'HIGH' region motif. Positions 229 to 233 (KMSKS) match the 'KMSKS' region motif. K232 contacts ATP. The region spanning 338-398 (ISITKALVDC…GKRKFAKLKV (61 aa)) is the S4 RNA-binding domain.

This sequence belongs to the class-I aminoacyl-tRNA synthetase family. TyrS type 2 subfamily. Homodimer.

It localises to the cytoplasm. The catalysed reaction is tRNA(Tyr) + L-tyrosine + ATP = L-tyrosyl-tRNA(Tyr) + AMP + diphosphate + H(+). Functionally, catalyzes the attachment of tyrosine to tRNA(Tyr) in a two-step reaction: tyrosine is first activated by ATP to form Tyr-AMP and then transferred to the acceptor end of tRNA(Tyr). The chain is Tyrosine--tRNA ligase from Sulfurimonas denitrificans (strain ATCC 33889 / DSM 1251) (Thiomicrospira denitrificans (strain ATCC 33889 / DSM 1251)).